The primary structure comprises 146 residues: Large ribosomal subunit protein uL15 (146 aa).

Over residues 1–13 (MKLHELKPAEGSR) the composition is skewed to basic and acidic residues. The interval 1-56 (MKLHELKPAEGSRKVRNRVGRGAATGNGKTSGRGQKGQKARSGGSVRPGFEGGQLP) is disordered. Residues 23-35 (AATGNGKTSGRGQ) show a composition bias toward gly residues.

It belongs to the universal ribosomal protein uL15 family. As to quaternary structure, part of the 50S ribosomal subunit.

Functionally, binds to the 23S rRNA. This is Large ribosomal subunit protein uL15 from Staphylococcus saprophyticus subsp. saprophyticus (strain ATCC 15305 / DSM 20229 / NCIMB 8711 / NCTC 7292 / S-41).